The chain runs to 306 residues: NAD kinase 1 (306 aa).

D67 acts as the Proton acceptor in catalysis. Residues 67–68 (DG), 149–150 (NE), and D181 contribute to the NAD(+) site.

The protein belongs to the NAD kinase family. A divalent metal cation is required as a cofactor.

It localises to the cytoplasm. The catalysed reaction is NAD(+) + ATP = ADP + NADP(+) + H(+). Functionally, involved in the regulation of the intracellular balance of NAD and NADP, and is a key enzyme in the biosynthesis of NADP. Catalyzes specifically the phosphorylation on 2'-hydroxyl of the adenosine moiety of NAD to yield NADP. This chain is NAD kinase 1, found in Thermosynechococcus vestitus (strain NIES-2133 / IAM M-273 / BP-1).